A 358-amino-acid chain; its full sequence is MAFTLEEIVQRFGGEIVGDRAHRVGNLAPLDQAGPDQLAFLANPKYLAQVETTRAGAVLINAADLAKLASPDGRNFIVTPNPYAYFARLAQAFIDMATPKAKRGVHPSATVDSSAQIAATAVIGPNVTVEAGVAIGENVRLDANVFVGRGTTIGAGSHLYPNVAVYHGCRLGERAIVHAGAVIGSDGFGFAPDFVGDGDARTGSWVKIPQVGGVSIGPDVEIGANTTIDRGAMADTVIEECVKIDNLVQIGHNCKIGAYTVIAGCAGIAGSTTIGRHCMIGGAVGIAGHVTLGDYVIVTAKSGVSKSLPKAGIYTSAFPAVDHADWNRSAALMRNLDKLRDRIKALEAAVASASGDKA.

His252 (proton acceptor) is an active-site residue.

This sequence belongs to the transferase hexapeptide repeat family. LpxD subfamily. As to quaternary structure, homotrimer.

It catalyses the reaction a UDP-3-O-[(3R)-3-hydroxyacyl]-alpha-D-glucosamine + a (3R)-hydroxyacyl-[ACP] = a UDP-2-N,3-O-bis[(3R)-3-hydroxyacyl]-alpha-D-glucosamine + holo-[ACP] + H(+). It participates in bacterial outer membrane biogenesis; LPS lipid A biosynthesis. In terms of biological role, catalyzes the N-acylation of UDP-3-O-acylglucosamine using 3-hydroxyacyl-ACP as the acyl donor. Is involved in the biosynthesis of lipid A, a phosphorylated glycolipid that anchors the lipopolysaccharide to the outer membrane of the cell. The sequence is that of UDP-3-O-acylglucosamine N-acyltransferase from Paraburkholderia phymatum (strain DSM 17167 / CIP 108236 / LMG 21445 / STM815) (Burkholderia phymatum).